The primary structure comprises 614 residues: MNAPDKFASLLALTREPFPASTKSYLAGSQPGLRVPVRDIQLTNGEVVSVYDTSGPYTDPAVQIDVRKGLASVRGEWIAARGDTEGYEGRVRKALDDGQKAEDGDRLAQLRAEAAALQRQPLRARSGANVTQMHYAKKGIVTPEMEYVALRENGRREWMQQYMQDTAREQRLAGNPLGASIPKIITPEFVRDEVARGRAIIPANINHPEVEPMAIGRNFKVKINANIGNSAVTSSIEEEVEKLVWAIRWGADNVMDLSTGKNIHTTRDWIVRNSPVPIGTVPIYQALEKVGGIAEDLTWEIFRDTLIEQAEQGVDYFTIHAGVRLAYIQLTAARRTGIVSRGGSIMAKWCMAHHKESFLYTHFEDICDIMKAYDVSFSLGDGLRPGCASDANDEAQFAELHTLGELTQIAWKHDVQTMIEGPGHVPMHMIQANMTEQLKTCHEAPFYTLGPLTIDIAPGYDHIASAIGAAMIGWMGTAMLCYVTPKEHLGLPDRDDVKQGIIAYKIAAHAADVAKGHPGARARDDALSQARFDFRWQDQFNLGLDPDTAKEYHDETLPKDSAKVAHFCSMCGPKFCSMKITQEVREFAQQGLQSKAEEFNRTGGELYVPIHRAD.

Substrate contacts are provided by residues Asn226, Met255, Tyr284, His320, 340–342, 381–384, and Glu420; these read SRG and DGLR. Position 424 (His424) interacts with Zn(2+). Residue Tyr447 coordinates substrate. His488 lines the Zn(2+) pocket. Residues Cys568, Cys571, and Cys576 each contribute to the [4Fe-4S] cluster site.

This sequence belongs to the ThiC family. Homodimer. It depends on [4Fe-4S] cluster as a cofactor.

The catalysed reaction is 5-amino-1-(5-phospho-beta-D-ribosyl)imidazole + S-adenosyl-L-methionine = 4-amino-2-methyl-5-(phosphooxymethyl)pyrimidine + CO + 5'-deoxyadenosine + formate + L-methionine + 3 H(+). The protein operates within cofactor biosynthesis; thiamine diphosphate biosynthesis. Functionally, catalyzes the synthesis of the hydroxymethylpyrimidine phosphate (HMP-P) moiety of thiamine from aminoimidazole ribotide (AIR) in a radical S-adenosyl-L-methionine (SAM)-dependent reaction. The polypeptide is Phosphomethylpyrimidine synthase (Acidovorax sp. (strain JS42)).